The primary structure comprises 619 residues: DBH-like monooxygenase protein 2 (619 aa).

An N-terminal signal peptide occupies residues 1-21 (MACVLLFRLFLLLVLAAFSQG). Over 22–594 (KRLGPTSPLR…LSGSNTATLR (573 aa)) the chain is Extracellular. Positions 40–156 (RAVFLRWDFD…DTMRVLAAYG (117 aa)) constitute a DOMON domain. Tyrosine 209 is a catalytic residue. Cystine bridges form between cysteine 211/cysteine 261 and cysteine 248/cysteine 271. Residues histidine 241 and histidine 242 each coordinate Cu cation. N-linked (GlcNAc...) asparagine glycosylation is present at asparagine 250. Residues histidine 309, histidine 390, and histidine 392 each contribute to the Cu cation site. Cystine bridges form between cysteine 366-cysteine 481 and cysteine 444-cysteine 466. Residue histidine 390 is part of the active site. An N-linked (GlcNAc...) asparagine glycan is attached at asparagine 405. Methionine 465 provides a ligand contact to Cu cation. An N-linked (GlcNAc...) asparagine glycan is attached at asparagine 477. Residues 595-615 (PLPMIAVLFLQGSLSCLLAML) form a helical membrane-spanning segment. At 616 to 619 (QTGV) the chain is on the cytoplasmic side.

Belongs to the copper type II ascorbate-dependent monooxygenase family. The cofactor is Cu(2+). Expressed at low levels in thymus and testis.

The protein localises to the membrane. The protein is DBH-like monooxygenase protein 2 (Moxd2) of Mus musculus (Mouse).